Consider the following 127-residue polypeptide: Longitudinals lacking protein-like (127 aa).

A BTB domain is found at 33-98 (TDVTLACEGQ…MYAGEVNVSQ (66 aa)).

In terms of assembly, the BTB domain interacts with the BTB domain of Trl in vitro. Found in a Pc-containing complex.

Its subcellular location is the nucleus. In terms of biological role, required, together with Trl, for maintaining the repressed state of target genes including homeotic genes Scr and Ubx. May also be involved in the activation of homeotic genes. Binds to a DNA Polycomb response element (PRE) at the bithorax complex. Also binds to polytene chromosomes at several hundred sites, many of which are shared with Trl and ph-p. Required during embryonic development. This Drosophila melanogaster (Fruit fly) protein is Longitudinals lacking protein-like.